The chain runs to 213 residues: Phosphatidylserine decarboxylase proenzyme (213 aa).

Serine 182 acts as the Schiff-base intermediate with substrate; via pyruvic acid in catalysis. Residue serine 182 is modified to Pyruvic acid (Ser); by autocatalysis.

This sequence belongs to the phosphatidylserine decarboxylase family. PSD-A subfamily. As to quaternary structure, heterodimer of a large membrane-associated beta subunit and a small pyruvoyl-containing alpha subunit. Pyruvate is required as a cofactor. Post-translationally, is synthesized initially as an inactive proenzyme. Formation of the active enzyme involves a self-maturation process in which the active site pyruvoyl group is generated from an internal serine residue via an autocatalytic post-translational modification. Two non-identical subunits are generated from the proenzyme in this reaction, and the pyruvate is formed at the N-terminus of the alpha chain, which is derived from the carboxyl end of the proenzyme. The post-translation cleavage follows an unusual pathway, termed non-hydrolytic serinolysis, in which the side chain hydroxyl group of the serine supplies its oxygen atom to form the C-terminus of the beta chain, while the remainder of the serine residue undergoes an oxidative deamination to produce ammonia and the pyruvoyl prosthetic group on the alpha chain.

It localises to the cell membrane. The enzyme catalyses a 1,2-diacyl-sn-glycero-3-phospho-L-serine + H(+) = a 1,2-diacyl-sn-glycero-3-phosphoethanolamine + CO2. Its pathway is phospholipid metabolism; phosphatidylethanolamine biosynthesis; phosphatidylethanolamine from CDP-diacylglycerol: step 2/2. In terms of biological role, catalyzes the formation of phosphatidylethanolamine (PtdEtn) from phosphatidylserine (PtdSer). The protein is Phosphatidylserine decarboxylase proenzyme of Chlorobium phaeobacteroides (strain BS1).